Consider the following 504-residue polypeptide: Sperm motility kinase 2A (504 aa).

The 249-residue stretch at 28–276 (YEMLGTIGHG…VAEVMMHPWV (249 aa)) folds into the Protein kinase domain. ATP is bound by residues 34–42 (IGHGGSTKV) and Lys57. Asp147 functions as the Proton acceptor in the catalytic mechanism. The 41-residue stretch at 294–334 (KPDPAIVKAMGHIGFQAQDIEDSLRQRKFNETMASYCLLKK) folds into the UBA domain. 2 stretches are compositionally biased toward polar residues: residues 376-393 (PTSL…CGRS) and 443-454 (SDESTEGHTSAS). 2 disordered regions span residues 376–403 (PTSL…RSFS) and 443–469 (SDES…PRGI).

This sequence belongs to the protein kinase superfamily. CAMK Ser/Thr protein kinase family. Smok subfamily. In terms of tissue distribution, testis-specific. Expressed in the testis from 22 days postpartum (22 dpp).

It carries out the reaction L-seryl-[protein] + ATP = O-phospho-L-seryl-[protein] + ADP + H(+). The catalysed reaction is L-threonyl-[protein] + ATP = O-phospho-L-threonyl-[protein] + ADP + H(+). May play a role in sperm motility, especially in the regulation of flagellar function. In Mus musculus (Mouse), this protein is Sperm motility kinase 2A (Smok2a).